A 479-amino-acid chain; its full sequence is Cardiolipin synthase A (479 aa).

The next 2 helical transmembrane spans lie at 8-28 and 38-58; these read FFGY…LHAV and IAWA…YLVF. PLD phosphodiesterase domains are found at residues 218–245 and 392–419; these read VNFR…GDEY and QPGF…DNRS. Residues H223, K225, D230, H397, K399, and D404 contribute to the active site.

Belongs to the phospholipase D family. Cardiolipin synthase subfamily. ClsA sub-subfamily.

The protein localises to the cell inner membrane. It catalyses the reaction 2 a 1,2-diacyl-sn-glycero-3-phospho-(1'-sn-glycerol) = a cardiolipin + glycerol. Functionally, catalyzes the reversible phosphatidyl group transfer from one phosphatidylglycerol molecule to another to form cardiolipin (CL) (diphosphatidylglycerol) and glycerol. This Pseudomonas putida (strain W619) protein is Cardiolipin synthase A.